Consider the following 148-residue polypeptide: Macrodomain Ter protein (148 aa).

It belongs to the MatP family. As to quaternary structure, homodimer.

The protein localises to the cytoplasm. Functionally, required for spatial organization of the terminus region of the chromosome (Ter macrodomain) during the cell cycle. Prevents early segregation of duplicated Ter macrodomains during cell division. Binds specifically to matS, which is a 13 bp signature motif repeated within the Ter macrodomain. The chain is Macrodomain Ter protein from Aliivibrio salmonicida (strain LFI1238) (Vibrio salmonicida (strain LFI1238)).